An 852-amino-acid chain; its full sequence is Tiger protein I3 (852 aa).

An N-terminal signal peptide occupies residues 1-18; the sequence is MKILLFFILFYLFSFSIS. Residues 19 to 830 are Extracellular-facing; it reads YDEVIPLGYE…DVHQYSDARN (812 aa). N-linked (GlcNAc...) asparagine glycosylation is found at asparagine 31, asparagine 47, asparagine 67, asparagine 97, asparagine 129, asparagine 201, asparagine 215, asparagine 228, asparagine 260, asparagine 323, asparagine 352, asparagine 356, asparagine 404, asparagine 441, asparagine 476, asparagine 483, asparagine 501, asparagine 512, asparagine 574, asparagine 592, asparagine 635, asparagine 658, asparagine 661, asparagine 679, asparagine 680, asparagine 723, asparagine 757, asparagine 761, asparagine 773, asparagine 785, and asparagine 800. The 78-residue stretch at 290–367 folds into the IPT/TIG domain; sequence IPSIVNSIPK…SSPIAVSIND (78 aa). A helical membrane pass occupies residues 831 to 851; the sequence is IFQNLLLSILIIIIISLFISN. Isoleucine 852 is a topological domain (cytoplasmic).

It is found in the membrane. This is Tiger protein I3 (tgrI3) from Dictyostelium discoideum (Social amoeba).